Consider the following 352-residue polypeptide: Divinyl chlorophyll a/b light-harvesting protein PcbB (352 aa).

6 helical membrane-spanning segments follow: residues Phe27–Leu47, Cys89–Leu109, Phe142–Ala162, Val203–Ile223, Ala243–Ser263, and Leu307–Leu327.

Belongs to the PsbB/PsbC family. IsiA/Pcb subfamily. As to quaternary structure, the antenna complex consists of divinyl chlorophylls (a and b) and divinyl chlorophyll a/b binding proteins and binds more divinyl chlorophyll b than does the antenna complex from high-light-adapted Prochlorococcus. Requires divinyl chlorophyll a as cofactor. The cofactor is divinyl chlorophyll b.

The protein resides in the cellular thylakoid membrane. The antenna complex functions as a light receptor, it captures and delivers excitation energy to photosystems II and I. The Prochlorales pcb genes are not related to higher plant LHCs. The sequence is that of Divinyl chlorophyll a/b light-harvesting protein PcbB (pcbB) from Prochlorococcus marinus (strain NATL2A).